The chain runs to 177 residues: MSRIGKKPVTVPSGVTATVDGQTVKMKGPKGQLQFLVHDDVEVKFENGQVKVAPRAETKRARSLYGTARAQIANLVEGVTKGFEKKLEITGVGYRAAMQGKNLQLALGYSHDVVYQIPEGITIAVPKPTEITITGIDPQRVGQVAAEIRAYRPPEPYKGKGVKYAGEFIFRKEGKKK.

The protein belongs to the universal ribosomal protein uL6 family. Part of the 50S ribosomal subunit.

This protein binds to the 23S rRNA, and is important in its secondary structure. It is located near the subunit interface in the base of the L7/L12 stalk, and near the tRNA binding site of the peptidyltransferase center. This chain is Large ribosomal subunit protein uL6, found in Bradyrhizobium sp. (strain ORS 278).